The following is a 1426-amino-acid chain: Protein RhsD (1426 aa).

Residues 256 to 285 (AEEARTSSLSSSDSSRPLSASAFPDTLPGT) form a disordered region. Residues 262–277 (SSLSSSDSSRPLSASA) are compositionally biased toward low complexity. The tract at residues 320-1197 (YTEAGELLAV…LNEENPHHVY (878 aa)) is 28 X approximate tandem repeats. A run of 27 repeats spans residues 334–356 (NTQV…HRYA), 357–378 (GRPE…LNPA), 379–421 (GLSY…ELAD), 422–442 (GSVT…TDAA), 443–464 (GRRT…TTPD), 465–485 (GRET…VSPD), 486–506 (GLES…TSRS), 507–529 (GETV…TDAT), 530–550 (GSTR…TDCS), 551–571 (GYQT…HREE), 572–592 (GISL…KDAQ), 593–613 (GRET…ITPD), 614–633 (GNRS…TTQG), 634–654 (GLTR…TNEN), 655–675 (GSHS…GGFD), 676–695 (GRTQ…SEDE), 696–715 (GLVI…RTVN), 716–738 (GEPA…HLSE), 739–762 (GHRV…QTVE), 812–832 (GGTP…VRSF), 833–861 (GSMA…HLNS), 862–882 (LVYD…ISGP), 883–905 (RQTR…LAPD), 906–941 (LDIR…NRIA), 942–970 (EDAH…VIRT), 971–995 (DDER…IQHG), and 996–1030 (EPLV…MSLS). A compositionally biased stretch (basic and acidic residues) spans 1073-1085 (ENGEREKAQRRSL). The tract at residues 1073 to 1097 (ENGEREKAQRRSLAETLQQEGSENG) is disordered. Copy 28 of the repeat occupies 1173 to 1197 (GNTAWSAEYDEWGNQLNEENPHHVY).

Belongs to the RHS family.

In terms of biological role, rhs elements have a nonessential function. They may play an important role in the natural ecology of the cell. In Escherichia coli (strain K12), this protein is Protein RhsD (rhsD).